Consider the following 262-residue polypeptide: tRNA pseudouridine synthase A (262 aa).

Asp51 (nucleophile) is an active-site residue. Tyr109 lines the substrate pocket.

Belongs to the tRNA pseudouridine synthase TruA family. Homodimer.

It carries out the reaction uridine(38/39/40) in tRNA = pseudouridine(38/39/40) in tRNA. Its function is as follows. Formation of pseudouridine at positions 38, 39 and 40 in the anticodon stem and loop of transfer RNAs. The sequence is that of tRNA pseudouridine synthase A from Aliivibrio salmonicida (strain LFI1238) (Vibrio salmonicida (strain LFI1238)).